We begin with the raw amino-acid sequence, 547 residues long: Chaperonin GroEL (547 aa).

Residues 30–33 (TLGP), lysine 51, 87–91 (DGTTT), glycine 415, and aspartate 496 contribute to the ATP site.

The protein belongs to the chaperonin (HSP60) family. As to quaternary structure, forms a cylinder of 14 subunits composed of two heptameric rings stacked back-to-back. Interacts with the co-chaperonin GroES.

It localises to the cytoplasm. The enzyme catalyses ATP + H2O + a folded polypeptide = ADP + phosphate + an unfolded polypeptide.. In terms of biological role, together with its co-chaperonin GroES, plays an essential role in assisting protein folding. The GroEL-GroES system forms a nano-cage that allows encapsulation of the non-native substrate proteins and provides a physical environment optimized to promote and accelerate protein folding. The chain is Chaperonin GroEL from Haemophilus ducreyi (strain 35000HP / ATCC 700724).